Consider the following 448-residue polypeptide: UPF0210 protein Pars_1033 (448 aa).

This sequence belongs to the UPF0210 family.

This Pyrobaculum arsenaticum (strain DSM 13514 / JCM 11321 / PZ6) protein is UPF0210 protein Pars_1033.